The sequence spans 249 residues: tRNA (guanine-N(1)-)-methyltransferase (249 aa).

Residues glycine 118 and 138-143 each bind S-adenosyl-L-methionine; that span reads IGDYVL.

It belongs to the RNA methyltransferase TrmD family. Homodimer.

It localises to the cytoplasm. It carries out the reaction guanosine(37) in tRNA + S-adenosyl-L-methionine = N(1)-methylguanosine(37) in tRNA + S-adenosyl-L-homocysteine + H(+). Its function is as follows. Specifically methylates guanosine-37 in various tRNAs. The polypeptide is tRNA (guanine-N(1)-)-methyltransferase (Alkaliphilus oremlandii (strain OhILAs) (Clostridium oremlandii (strain OhILAs))).